The chain runs to 621 residues: MALLQIAEPGQSPQPHQRRLAVGIDLGTTNSLVATLRSGLAESLKDTEGETILPSAVRYLPDGRVEVGRAAKAAAAVDPLNTVLSVKRLMGRGIADVKLLGEQLPYRFAEGESHMPFIETVQGPKSPVEVSAEILRVLRRRAEEALGGELVGAVITVPAYFDEAQRQATKDAARLAGLDVLRLLNEPTAAAVAYGLDRGAEGVVAIYDLGGGTFDISILRLTRGVFEVLATGGDSALGGDDFDHAIANWIVEQAGLSADLDPGVQRHLLQLACAAKEALSDSGSVALAYGPWQGELSRERFEALIEPLVARSLKACRRALRDAGIEPQEIAAVVMVGGSTRVPRVRRAAAELFDRQPLTDIDPDQVVAIGAALQADTLAGNGRDGEELLLLDVNPLSLGLETMGRLMEKVIPRNTTLPVARAQEFTTYKDGQTAMLIHVLQGERELVKDCRSLARFELRGIPPMVAGAAKIRVTFQVDADGLLNVSARELGSGIEASVQVKPSYGLTDGEIARMLKDSFEYAGGDKAARALREQQVEAQRLLEAVQAALEADGEALLSPAERAAIEAQMQALRGVLDGPDAAVIETHVRHLTQVTDAFAARRLDASVKAALSGRRLNEIEE.

The protein belongs to the heat shock protein 70 family.

Its function is as follows. Chaperone involved in the maturation of iron-sulfur cluster-containing proteins. Has a low intrinsic ATPase activity which is markedly stimulated by HscB. The polypeptide is Chaperone protein HscA homolog (Azotobacter vinelandii (strain DJ / ATCC BAA-1303)).